Consider the following 76-residue polypeptide: ATP synthase peripheral stalk subunit F6, mitochondrial (76 aa).

N6-acetyllysine occurs at positions 9, 14, and 47. Residues Lys52 and Lys67 each carry the N6-acetyllysine; alternate modification. 2 positions are modified to N6-succinyllysine; alternate: Lys52 and Lys67. Lys73 carries the post-translational modification N6-acetyllysine. Residue Ser76 is modified to Phosphoserine.

This sequence belongs to the eukaryotic ATPase subunit F6 family. Component of the ATP synthase complex composed at least of ATP5F1A/subunit alpha, ATP5F1B/subunit beta, ATP5MC1/subunit c (homooctomer), MT-ATP6/subunit a, MT-ATP8/subunit 8, ATP5ME/subunit e, ATP5MF/subunit f, ATP5MG/subunit g, ATP5MK/subunit k, ATP5MJ/subunit j, ATP5F1C/subunit gamma, ATP5F1D/subunit delta, ATP5F1E/subunit epsilon, ATP5PF/subunit F6, ATP5PB/subunit b, ATP5PD/subunit d, ATP5PO/subunit OSCP. ATP synthase complex consists of a soluble F(1) head domain (subunits alpha(3) and beta(3)) - the catalytic core - and a membrane F(0) domain - the membrane proton channel (subunits c, a, 8, e, f, g, k and j). These two domains are linked by a central stalk (subunits gamma, delta, and epsilon) rotating inside the F1 region and a stationary peripheral stalk (subunits F6, b, d, and OSCP).

It localises to the mitochondrion. The protein localises to the mitochondrion inner membrane. In terms of biological role, subunit F6, of the mitochondrial membrane ATP synthase complex (F(1)F(0) ATP synthase or Complex V) that produces ATP from ADP in the presence of a proton gradient across the membrane which is generated by electron transport complexes of the respiratory chain. ATP synthase complex consist of a soluble F(1) head domain - the catalytic core - and a membrane F(1) domain - the membrane proton channel. These two domains are linked by a central stalk rotating inside the F(1) region and a stationary peripheral stalk. During catalysis, ATP synthesis in the catalytic domain of F(1) is coupled via a rotary mechanism of the central stalk subunits to proton translocation. In vivo, can only synthesize ATP although its ATP hydrolase activity can be activated artificially in vitro. Part of the complex F(0) domain. Part of the complex F(0) domain and the peripheric stalk, which acts as a stator to hold the catalytic alpha(3)beta(3) subcomplex and subunit a/ATP6 static relative to the rotary elements. This Sus scrofa (Pig) protein is ATP synthase peripheral stalk subunit F6, mitochondrial.